Reading from the N-terminus, the 320-residue chain is o-succinylbenzoate synthase (320 aa).

The active-site Proton donor is lysine 133. Mg(2+) is bound by residues aspartate 161, glutamate 190, and aspartate 213. The active-site Proton acceptor is lysine 235.

Belongs to the mandelate racemase/muconate lactonizing enzyme family. MenC type 1 subfamily. It depends on a divalent metal cation as a cofactor.

The catalysed reaction is (1R,6R)-6-hydroxy-2-succinyl-cyclohexa-2,4-diene-1-carboxylate = 2-succinylbenzoate + H2O. It participates in quinol/quinone metabolism; 1,4-dihydroxy-2-naphthoate biosynthesis; 1,4-dihydroxy-2-naphthoate from chorismate: step 4/7. It functions in the pathway quinol/quinone metabolism; menaquinone biosynthesis. Functionally, converts 2-succinyl-6-hydroxy-2,4-cyclohexadiene-1-carboxylate (SHCHC) to 2-succinylbenzoate (OSB). This Shigella sonnei (strain Ss046) protein is o-succinylbenzoate synthase.